Reading from the N-terminus, the 596-residue chain is MWQVLRGWRKGWQSPRGALAWAVQGQPCPPCSRAVASVGKDEYTFVVVGAGSAGCVLASRLTEDPNHRVLLLEAGPKDLLMGSKRLQWKIHMPAALVSNLCDDKYNWYYHTEPQPGMDSRVLYWPRGRVWGGSSSLNAMVYIRGHAEDYNRWHREGAEGWDYAHCLPYFRKAQRHELGANMYRGGDGPLHVSRGKTNHPLHQAFLQAARQAGYPFTEDMNGFQQEGFGWMDMTVHQGKRWSTACAYLHPVLSRPNLRAEVQTLVSRVLFEGTRAVGVEYIKDGQRHKAYVSREVILSGGAINSPQLLMLSGVGNADDLRKLDIPVVCHLPGVGQNLQDHLEVYVQQACTQPITLHSAQKPLRKVCIGLEWLWSYTGDGATAHLETGGFIRSRPGVPHPDIQFHFLPSQVIDHGRKPTQQEAYQVHVGTMRATSVGWLKLRSANPRDHPVIHPNYLSTETDVEDFRQCVRLSREIFAQEALAPFRGKELQPGSHVQSDKEIDAFVRAKADSAYHPSCTCKMGRSSDPTAVVDAQTKVIGVENLRVVDASIMPSVVSGNLNAPTVMIAEKAADIIKGHPALEDKNVPVYKPQTLDTQR.

A mitochondrion-targeting transit peptide spans 1 to 34; that stretch reads MWQVLRGWRKGWQSPRGALAWAVQGQPCPPCSRA. 44-73 serves as a coordination point for FAD; sequence TFVVVGAGSAGCVLASRLTEDPNHRVLLLE. K438 carries the post-translational modification N6-succinyllysine. An N6-acetyllysine; alternate mark is found at K486 and K498. N6-succinyllysine; alternate occurs at positions 486 and 498. The active-site Proton acceptor is H513. N6-acetyllysine is present on K582.

It belongs to the GMC oxidoreductase family. Requires FAD as cofactor. Post-translationally, acetylation of Lys-498 is observed in liver mitochondria from fasted mice but not from fed mice.

It localises to the mitochondrion inner membrane. It catalyses the reaction choline + A = betaine aldehyde + AH2. It participates in amine and polyamine biosynthesis; betaine biosynthesis via choline pathway; betaine aldehyde from choline (cytochrome c reductase route): step 1/1. This chain is Choline dehydrogenase, mitochondrial (Chdh), found in Mus musculus (Mouse).